A 222-amino-acid polypeptide reads, in one-letter code: Eukaryotic translation initiation factor 3 subunit K (222 aa).

A PCI domain is found at 46–208 (YDLEANLAVL…KIKTKNITEK (163 aa)).

This sequence belongs to the eIF-3 subunit K family. In terms of assembly, component of the eukaryotic translation initiation factor 3 (eIF-3) complex. The eIF-3 complex interacts with pix.

It is found in the cytoplasm. Functionally, component of the eukaryotic translation initiation factor 3 (eIF-3) complex, which is involved in protein synthesis of a specialized repertoire of mRNAs and, together with other initiation factors, stimulates binding of mRNA and methionyl-tRNAi to the 40S ribosome. The eIF-3 complex specifically targets and initiates translation of a subset of mRNAs involved in cell proliferation. The sequence is that of Eukaryotic translation initiation factor 3 subunit K from Drosophila mojavensis (Fruit fly).